The sequence spans 1124 residues: PAN2-PAN3 deadenylation complex catalytic subunit PAN2 (1124 aa).

WD repeat units follow at residues Ile19–Pro58, Pro118–Phe157, Asn158–Ser195, and Ser309–Phe348. The linker stretch occupies residues Phe351 to Val484. Positions Val484 to Ala861 constitute a USP domain. In terms of domain architecture, Exonuclease spans Ile917 to Tyr1091. A divalent metal cation-binding residues include Asp920, Glu922, Asp1030, and Asp1083.

It belongs to the peptidase C19 family. PAN2 subfamily. In terms of assembly, forms a heterotrimer with an asymmetric homodimer of the regulatory subunit PAN3 to form the poly(A)-nuclease (PAN) deadenylation complex. Requires a divalent metal cation as cofactor.

Its subcellular location is the cytoplasm. It carries out the reaction Exonucleolytic cleavage of poly(A) to 5'-AMP.. Its activity is regulated as follows. Positively regulated by the regulatory subunit PAN3. Catalytic subunit of the poly(A)-nuclease (PAN) deadenylation complex, one of two cytoplasmic mRNA deadenylases involved in mRNA turnover. PAN specifically shortens poly(A) tails of RNA and the activity is stimulated by poly(A)-binding protein PAB1. PAN deadenylation is followed by rapid degradation of the shortened mRNA tails by the CCR4-NOT complex. Deadenylated mRNAs are then degraded by two alternative mechanisms, namely exosome-mediated 3'-5' exonucleolytic degradation, or deadenylation-dependent mRNA decaping and subsequent 5'-3' exonucleolytic degradation by XRN1. May also be involved in post-transcriptional maturation of mRNA poly(A) tails. This chain is PAN2-PAN3 deadenylation complex catalytic subunit PAN2, found in Debaryomyces hansenii (strain ATCC 36239 / CBS 767 / BCRC 21394 / JCM 1990 / NBRC 0083 / IGC 2968) (Yeast).